The chain runs to 154 residues: Interleukin-2 (154 aa).

The signal sequence occupies residues 1–20 (MYRMQLLSCIALSLALITNS). Residue Thr23 is glycosylated (O-linked (GalNAc...) threonine). Cysteines 78 and 126 form a disulfide.

This sequence belongs to the IL-2 family.

The protein localises to the secreted. Cytokine produced by activated CD4-positive helper T-cells and to a lesser extend activated CD8-positive T-cells and natural killer (NK) cells that plays pivotal roles in the immune response and tolerance. Binds to a receptor complex composed of either the high-affinity trimeric IL-2R (IL2RA/CD25, IL2RB/CD122 and IL2RG/CD132) or the low-affinity dimeric IL-2R (IL2RB and IL2RG). Interaction with the receptor leads to oligomerization and conformation changes in the IL-2R subunits resulting in downstream signaling starting with phosphorylation of JAK1 and JAK3. In turn, JAK1 and JAK3 phosphorylate the receptor to form a docking site leading to the phosphorylation of several substrates including STAT5. This process leads to activation of several pathways including STAT, phosphoinositide-3-kinase/PI3K and mitogen-activated protein kinase/MAPK pathways. Functions as a T-cell growth factor and can increase NK-cell cytolytic activity as well. Promotes strong proliferation of activated B-cells and subsequently immunoglobulin production. Plays a pivotal role in regulating the adaptive immune system by controlling the survival and proliferation of regulatory T-cells, which are required for the maintenance of immune tolerance. Moreover, participates in the differentiation and homeostasis of effector T-cell subsets, including Th1, Th2, Th17 as well as memory CD8-positive T-cells. This Saimiri sciureus (Common squirrel monkey) protein is Interleukin-2 (IL2).